A 428-amino-acid chain; its full sequence is Ribulose bisphosphate carboxylase (428 aa).

Lysine 151 serves as the catalytic Proton acceptor. Residue lysine 153 coordinates substrate. Residues lysine 177, aspartate 179, and glutamate 180 each coordinate Mg(2+). An N6-carboxylysine modification is found at lysine 177. The Proton acceptor role is filled by histidine 270. Residues arginine 271, histidine 303, 354-356 (SGG), and 376-379 (QFGG) contribute to the substrate site.

This sequence belongs to the RuBisCO large chain family. Type III subfamily. In terms of assembly, homodimer or homodecamer. In contrast to form I RuBisCO, the form III RuBisCO is composed solely of large subunits. The cofactor is Mg(2+).

The catalysed reaction is 2 (2R)-3-phosphoglycerate + 2 H(+) = D-ribulose 1,5-bisphosphate + CO2 + H2O. It catalyses the reaction D-ribulose 1,5-bisphosphate + O2 = 2-phosphoglycolate + (2R)-3-phosphoglycerate + 2 H(+). Catalyzes the addition of molecular CO(2) and H(2)O to ribulose 1,5-bisphosphate (RuBP), generating two molecules of 3-phosphoglycerate (3-PGA). Functions in an archaeal AMP degradation pathway, together with AMP phosphorylase and R15P isomerase. This is Ribulose bisphosphate carboxylase from Methanosarcina barkeri (strain Fusaro / DSM 804).